The chain runs to 364 residues: UDP-N-acetylglucosamine--N-acetylmuramyl-(pentapeptide) pyrophosphoryl-undecaprenol N-acetylglucosamine transferase (364 aa).

Residues 10–12 (TGG), asparagine 124, arginine 165, serine 193, isoleucine 248, and glutamine 293 each bind UDP-N-acetyl-alpha-D-glucosamine.

Belongs to the glycosyltransferase 28 family. MurG subfamily.

The protein localises to the cell inner membrane. The enzyme catalyses di-trans,octa-cis-undecaprenyl diphospho-N-acetyl-alpha-D-muramoyl-L-alanyl-D-glutamyl-meso-2,6-diaminopimeloyl-D-alanyl-D-alanine + UDP-N-acetyl-alpha-D-glucosamine = di-trans,octa-cis-undecaprenyl diphospho-[N-acetyl-alpha-D-glucosaminyl-(1-&gt;4)]-N-acetyl-alpha-D-muramoyl-L-alanyl-D-glutamyl-meso-2,6-diaminopimeloyl-D-alanyl-D-alanine + UDP + H(+). It functions in the pathway cell wall biogenesis; peptidoglycan biosynthesis. Its function is as follows. Cell wall formation. Catalyzes the transfer of a GlcNAc subunit on undecaprenyl-pyrophosphoryl-MurNAc-pentapeptide (lipid intermediate I) to form undecaprenyl-pyrophosphoryl-MurNAc-(pentapeptide)GlcNAc (lipid intermediate II). The polypeptide is UDP-N-acetylglucosamine--N-acetylmuramyl-(pentapeptide) pyrophosphoryl-undecaprenol N-acetylglucosamine transferase (Geobacter metallireducens (strain ATCC 53774 / DSM 7210 / GS-15)).